The chain runs to 360 residues: Dual-specificity RNA methyltransferase RlmN (360 aa).

Glu-93 acts as the Proton acceptor in catalysis. Residues 99 to 326 enclose the Radical SAM core domain; the sequence is EEDRNTLCIS…VITRSSRGAD (228 aa). An intrachain disulfide couples Cys-106 to Cys-331. Residues Cys-113, Cys-117, and Cys-120 each contribute to the [4Fe-4S] cluster site. Residues 158-159, Ser-190, 212-214, and Asn-288 contribute to the S-adenosyl-L-methionine site; these read GE and SLN. Cys-331 (S-methylcysteine intermediate) is an active-site residue.

It belongs to the radical SAM superfamily. RlmN family. The cofactor is [4Fe-4S] cluster.

It is found in the cytoplasm. The enzyme catalyses adenosine(2503) in 23S rRNA + 2 reduced [2Fe-2S]-[ferredoxin] + 2 S-adenosyl-L-methionine = 2-methyladenosine(2503) in 23S rRNA + 5'-deoxyadenosine + L-methionine + 2 oxidized [2Fe-2S]-[ferredoxin] + S-adenosyl-L-homocysteine. It catalyses the reaction adenosine(37) in tRNA + 2 reduced [2Fe-2S]-[ferredoxin] + 2 S-adenosyl-L-methionine = 2-methyladenosine(37) in tRNA + 5'-deoxyadenosine + L-methionine + 2 oxidized [2Fe-2S]-[ferredoxin] + S-adenosyl-L-homocysteine. Functionally, specifically methylates position 2 of adenine 2503 in 23S rRNA and position 2 of adenine 37 in tRNAs. m2A2503 modification seems to play a crucial role in the proofreading step occurring at the peptidyl transferase center and thus would serve to optimize ribosomal fidelity. This chain is Dual-specificity RNA methyltransferase RlmN, found in Geobacter sulfurreducens (strain ATCC 51573 / DSM 12127 / PCA).